We begin with the raw amino-acid sequence, 501 residues long: Histidine--tRNA ligase (501 aa).

This sequence belongs to the class-II aminoacyl-tRNA synthetase family. In terms of assembly, homodimer.

It localises to the cytoplasm. It carries out the reaction tRNA(His) + L-histidine + ATP = L-histidyl-tRNA(His) + AMP + diphosphate + H(+). This chain is Histidine--tRNA ligase, found in Methylocella silvestris (strain DSM 15510 / CIP 108128 / LMG 27833 / NCIMB 13906 / BL2).